We begin with the raw amino-acid sequence, 439 residues long: Indole-3-pyruvate monooxygenase YUCCA4 (439 aa).

Residue 49 to 54 (GAGPAG) participates in FAD binding. 226-231 (GCGNSG) serves as a coordination point for NADP(+).

Belongs to the FMO family. FAD is required as a cofactor.

It carries out the reaction indole-3-pyruvate + NADPH + O2 + H(+) = (indol-3-yl)acetate + CO2 + NADP(+) + H2O. Functionally, involved in auxin biosynthesis in anthers. The protein is Indole-3-pyruvate monooxygenase YUCCA4 of Oryza sativa subsp. japonica (Rice).